Reading from the N-terminus, the 194-residue chain is Fe/S biogenesis protein NfuA (194 aa).

2 residues coordinate [4Fe-4S] cluster: Cys-151 and Cys-154.

This sequence belongs to the NfuA family. In terms of assembly, homodimer. [4Fe-4S] cluster is required as a cofactor.

Functionally, involved in iron-sulfur cluster biogenesis. Binds a 4Fe-4S cluster, can transfer this cluster to apoproteins, and thereby intervenes in the maturation of Fe/S proteins. Could also act as a scaffold/chaperone for damaged Fe/S proteins. The sequence is that of Fe/S biogenesis protein NfuA from Mannheimia succiniciproducens (strain KCTC 0769BP / MBEL55E).